A 534-amino-acid polypeptide reads, in one-letter code: Origin of replication complex subunit 5 (534 aa).

The interval 1-36 (MPPKEESSKVTRRSTRSSASVTVENSEPIESHTPTI) is disordered. Residue 83-90 (GGASTGKT) participates in ATP binding. The Nuclear localization signal signature appears at 129 to 136 (HRKCSLNG). The segment at 397–428 (MFDSTGGMDNRKRKRKASEKSMEKKEIAEQEA) is disordered. Basic and acidic residues predominate over residues 414 to 424 (SEKSMEKKEIA).

It belongs to the ORC5 family. In terms of assembly, component of the origin recognition complex (ORC) composed of at least ORC1 (ORC1A or ORC1B), ORC2, ORC3, ORC4, ORC5 and ORC6. ORC is regulated in a cell-cycle and development dependent manner. It is sequentially assembled at the exit from anaphase of mitosis and disassembled as cells enter S phase. Interacts directly with ORC1A, ORC1B, ORC2, ORC3, ORC4 and ORC6. As to expression, follow a cell-cycle regulation with a peak at the G1/S-phase. Mostly expressed in flower buds and cauline leaves, and, to a lower exent, in roots, leaves and stems. Expressed at low levels ubiquitously.

Its subcellular location is the nucleus. Functionally, component of the origin recognition complex (ORC) that binds origins of replication. DNA-binding is ATP-dependent. The specific DNA sequences that define origins of replication have not been identified yet. ORC is required to assemble the pre-replication complex necessary to initiate DNA replication. The sequence is that of Origin of replication complex subunit 5 from Arabidopsis thaliana (Mouse-ear cress).